A 308-amino-acid polypeptide reads, in one-letter code: Pantothenate kinase (308 aa).

91 to 98 (GSVAVGKS) provides a ligand contact to ATP.

It belongs to the prokaryotic pantothenate kinase family.

It localises to the cytoplasm. It carries out the reaction (R)-pantothenate + ATP = (R)-4'-phosphopantothenate + ADP + H(+). The protein operates within cofactor biosynthesis; coenzyme A biosynthesis; CoA from (R)-pantothenate: step 1/5. This Lacticaseibacillus paracasei (strain ATCC 334 / BCRC 17002 / CCUG 31169 / CIP 107868 / KCTC 3260 / NRRL B-441) (Lactobacillus paracasei) protein is Pantothenate kinase.